A 453-amino-acid polypeptide reads, in one-letter code: Pre-mRNA-splicing factor prp46 (453 aa).

Low complexity predominate over residues 62 to 71 (EKQAKAAAAG). The segment at 62-129 (EKQAKAAAAG…PSATRQQRPD (68 aa)) is disordered. 7 WD repeats span residues 142–181 (GHLGWVRSLAVEPNNEWFASGAGDRTIKIWNLATGALRLT), 184–223 (GHISTVRGLAVSPRHPYLFSCGEDKMVKCWDLETNKVIRH), 226–265 (GHLSGVYTLALHPRLDLLVTGGRDGVARVWDMRTRSNIHV), 268–309 (GHKG…GVLT), 311–350 (HKKGVRNLAIHPREFTFASASTGSIKQWKCPEGDFMQNFE), 351–389 (GHNAVINSLAVNEDNVLFSGGDNGSMCFWDWKTGYKFQS), and 400–439 (DAEAGIMSATFDRTGLRLITGEADKTIKVWKPDDEATPES). The interval 432–453 (DDEATPESHPVTWAPTLGRQRY) is disordered.

The protein belongs to the WD repeat PRL1/PRL2 family. Associated with the spliceosome.

It is found in the cytoplasm. It localises to the nucleus. Functionally, involved in pre-mRNA splicing and required for cell cycle progression at G2/M. The sequence is that of Pre-mRNA-splicing factor prp46 (prp46) from Aspergillus fumigatus (strain ATCC MYA-4609 / CBS 101355 / FGSC A1100 / Af293) (Neosartorya fumigata).